Consider the following 228-residue polypeptide: Phosphatidate cytidylyltransferase (228 aa).

6 helical membrane passes run 31 to 51, 65 to 85, 93 to 113, 131 to 151, 165 to 185, and 206 to 226; these read FVIA…LVGL, INYL…LIFL, LVIM…MIGG, WTGL…VSLI, IYLF…DLFI, and GVLD…CINI.

The protein belongs to the CDS family.

It localises to the cell membrane. It carries out the reaction a 1,2-diacyl-sn-glycero-3-phosphate + CTP + H(+) = a CDP-1,2-diacyl-sn-glycerol + diphosphate. It functions in the pathway phospholipid metabolism; CDP-diacylglycerol biosynthesis; CDP-diacylglycerol from sn-glycerol 3-phosphate: step 3/3. In Rickettsia prowazekii (strain Madrid E), this protein is Phosphatidate cytidylyltransferase (cdsA).